A 432-amino-acid chain; its full sequence is Glutamyl-tRNA reductase (432 aa).

Substrate contacts are provided by residues 49–52, S101, 106–108, and Q112; these read TCNR and EPQ. C50 serves as the catalytic Nucleophile. 181–186 contacts NADP(+); the sequence is GAGETI. The disordered stretch occupies residues 407–432; that stretch reads FPEKPGYQHPPIATPIVRTDDADPAP.

Belongs to the glutamyl-tRNA reductase family. Homodimer.

It carries out the reaction (S)-4-amino-5-oxopentanoate + tRNA(Glu) + NADP(+) = L-glutamyl-tRNA(Glu) + NADPH + H(+). It participates in porphyrin-containing compound metabolism; protoporphyrin-IX biosynthesis; 5-aminolevulinate from L-glutamyl-tRNA(Glu): step 1/2. Its function is as follows. Catalyzes the NADPH-dependent reduction of glutamyl-tRNA(Glu) to glutamate 1-semialdehyde (GSA). In Xanthomonas oryzae pv. oryzae (strain MAFF 311018), this protein is Glutamyl-tRNA reductase.